The primary structure comprises 235 residues: Probable RNA 2'-phosphotransferase (235 aa).

Belongs to the KptA/TPT1 family.

Removes the 2'-phosphate from RNA via an intermediate in which the phosphate is ADP-ribosylated by NAD followed by a presumed transesterification to release the RNA and generate ADP-ribose 1''-2''-cyclic phosphate (APPR&gt;P). May function as an ADP-ribosylase. This Thermoplasma volcanium (strain ATCC 51530 / DSM 4299 / JCM 9571 / NBRC 15438 / GSS1) protein is Probable RNA 2'-phosphotransferase.